The primary structure comprises 464 residues: Formin-like protein 19 (464 aa).

The segment at methionine 1 to threonine 74 is disordered. The span at proline 14–arginine 70 shows a compositional bias: pro residues. Positions cysteine 68–lysine 462 constitute an FH2 domain.

Belongs to the formin-like family. Class-II subfamily.

The polypeptide is Formin-like protein 19 (FH19) (Arabidopsis thaliana (Mouse-ear cress)).